The sequence spans 712 residues: Polyribonucleotide nucleotidyltransferase (712 aa).

Asp-493 and Asp-499 together coordinate Mg(2+). The KH domain maps to 560–619 (PRLLTFKVDPEDIGKIIGPGGKTVRGITEATGAKVDISDDGTITVSSSVGGQAEAARAMI). One can recognise an S1 motif domain in the interval 629 to 697 (GQVYLGKVTR…HKGRINLTRL (69 aa)).

The protein belongs to the polyribonucleotide nucleotidyltransferase family. Mg(2+) serves as cofactor.

Its subcellular location is the cytoplasm. It catalyses the reaction RNA(n+1) + phosphate = RNA(n) + a ribonucleoside 5'-diphosphate. In terms of biological role, involved in mRNA degradation. Catalyzes the phosphorolysis of single-stranded polyribonucleotides processively in the 3'- to 5'-direction. This Synechococcus sp. (strain JA-2-3B'a(2-13)) (Cyanobacteria bacterium Yellowstone B-Prime) protein is Polyribonucleotide nucleotidyltransferase.